Reading from the N-terminus, the 98-residue chain is uncharacterized protein (98 aa).

Residues 1 to 23 form the signal peptide; it reads MKKMQSIVLALSLVLVAPMAAQA. The interval 68–98 is disordered; it reads WHLHGPPPPPRHHKKAPHDHHGGHGPGKHHR. A compositionally biased stretch (basic residues) spans 77–98; it reads PRHHKKAPHDHHGGHGPGKHHR.

The protein to E.coli YpeC.

This is an uncharacterized protein from Escherichia coli (strain K12).